A 388-amino-acid polypeptide reads, in one-letter code: MFELTDAQRQLQQSARRLALEAIAPHAAQTDRSEQYPWHTVEALREQRLMGMTLPPEYGGKGASYFDTVLVIEELSKVCAASGRIMVESNMGAIGAIMKYGSDAQKQLAARLVLAGDKPAICITEPQAGSAASDMQTRAERRGDTWHLSGCKHWITGGGVSKLHFVFARAIEDGKDTGIAGFIVVGPDVPGMTIQRIPAMGIRGVPEARIEFDDMRVRHDMKVTPPGRTEAGFAGLMNAYNAQRVGAATVALGIAQGAFDLALDYAKRREQFGRPIAEFQGLQWMLADMSIQLEAARLMVWKAAASGSEFPSMFAAAQAKIAAGEAAIKVTNDALQIHGAVGYGRDLPLERMVRDARMFTISGGTAQILRTQVAGTLLGQKLSQRRSA.

FAD is bound by residues 121–124, serine 130, and 153–156; these read ICIT and HWIT. Position 240-241 (240-241) interacts with substrate; that stretch reads YN. FAD is bound by residues arginine 269, glutamine 336, 363–367, and glutamine 384; that span reads GGTAQ.

The protein belongs to the acyl-CoA dehydrogenase family. Homotrimer or homotetramer. The cofactor is FAD.

It catalyses the reaction 3-sulfinopropanoyl-CoA + H2O = propanoyl-CoA + sulfite + H(+). Its function is as follows. Catalyzes the conversion 3-sulfinopropanoyl-CoA (3SP-CoA) to propanoyl-CoA by abstraction of sulfite. Does not show dehydrogenase activity. This Paraburkholderia xenovorans (strain LB400) protein is 3-sulfinopropanoyl-CoA desulfinase.